The following is a 95-amino-acid chain: Cobalt transport protein CbiN (95 aa).

The next 2 helical transmembrane spans lie at 7–27 (IMLI…SGLG) and 67–87 (LLFA…FGYY).

Belongs to the CbiN family. Forms an energy-coupling factor (ECF) transporter complex composed of an ATP-binding protein (A component, CbiO), a transmembrane protein (T component, CbiQ) and 2 possible substrate-capture proteins (S components, CbiM and CbiN) of unknown stoichimetry.

The protein resides in the cell membrane. It functions in the pathway cofactor biosynthesis; adenosylcobalamin biosynthesis. Its function is as follows. Part of the energy-coupling factor (ECF) transporter complex CbiMNOQ involved in cobalt import. This chain is Cobalt transport protein CbiN, found in Methanothermobacter marburgensis (strain ATCC BAA-927 / DSM 2133 / JCM 14651 / NBRC 100331 / OCM 82 / Marburg) (Methanobacterium thermoautotrophicum).